A 390-amino-acid chain; its full sequence is 8-amino-7-oxononanoate synthase (390 aa).

Residue arginine 19 participates in substrate binding. A pyridoxal 5'-phosphate-binding site is contributed by 106–107; sequence GY. Residue histidine 131 participates in substrate binding. Pyridoxal 5'-phosphate-binding residues include serine 176, histidine 204, and threonine 233. Lysine 236 bears the N6-(pyridoxal phosphate)lysine mark. Threonine 350 serves as a coordination point for substrate.

It belongs to the class-II pyridoxal-phosphate-dependent aminotransferase family. BioF subfamily. As to quaternary structure, homodimer. Requires pyridoxal 5'-phosphate as cofactor.

The enzyme catalyses 6-carboxyhexanoyl-[ACP] + L-alanine + H(+) = (8S)-8-amino-7-oxononanoate + holo-[ACP] + CO2. Its pathway is cofactor biosynthesis; biotin biosynthesis. In terms of biological role, catalyzes the decarboxylative condensation of pimeloyl-[acyl-carrier protein] and L-alanine to produce 8-amino-7-oxononanoate (AON), [acyl-carrier protein], and carbon dioxide. The polypeptide is 8-amino-7-oxononanoate synthase (Pseudomonas putida (strain ATCC 700007 / DSM 6899 / JCM 31910 / BCRC 17059 / LMG 24140 / F1)).